We begin with the raw amino-acid sequence, 855 residues long: Oxysterol-binding protein-related protein 3 (855 aa).

The interval 1-32 is disordered; that stretch reads MSDEKNLGVSQKLVSPSRSTSSCSSKQGSRQD. Phosphoserine is present on residues Ser15 and Ser33. Residues 15 to 31 show a composition bias toward low complexity; the sequence is SPSRSTSSCSSKQGSRQ. The PH domain occupies 50–145; it reads PPVQKGFLLK…WVSKLRHHRM (96 aa). The short motif at 161-167 is the FFAT 1 element; it reads FFSGSSV. Ser199, Ser250, Ser272, Ser277, Ser288, Ser291, Ser340, Ser393, Ser405, and Ser408 each carry phosphoserine. The disordered stretch occupies residues 274–293; it reads PNLSTLDFGEEKSYSDGSEA. Residues 377–396 form a disordered region; that stretch reads DPPAVPKPGDNLAEENSRDE. The FFAT 2 motif lies at 450-454; sequence LSLDN. The segment at 468–490 is disordered; that stretch reads PVLESSGEARSKRRTSLPAPGPN.

Belongs to the OSBP family. Homodimer. Interacts with RRAS. Interacts (phosphorylated form) with VAPA. Interacts with OSBPL6. Post-translationally, phosphorylation is enhanced in vitro by phorbol-12-myristate-13-acetate (PMA), forskolin and calcium ionophore A23187. Phosphorylation seems to be stimulated in conditions of low cell-cell (or cell-matrix) adhesion. Expressed in spinal ganglia. Expressed in a subset of small lymphocytes (at protein level).

It localises to the endoplasmic reticulum membrane. Its subcellular location is the cytoplasm. The protein localises to the cytosol. The protein resides in the cell membrane. It is found in the cell projection. It localises to the filopodium tip. Its subcellular location is the nucleus membrane. Its function is as follows. Phosphoinositide-binding protein which associates with both cell and endoplasmic reticulum (ER) membranes. Can bind to the ER membrane protein VAPA and recruit VAPA to plasma membrane sites, thus linking these intracellular compartments. The ORP3-VAPA complex stimulates RRAS signaling which in turn attenuates integrin beta-1 (ITGB1) activation at the cell surface. With VAPA, may regulate ER morphology. Has a role in regulation of the actin cytoskeleton, cell polarity and cell adhesion. Binds to phosphoinositides with preference for PI(3,4)P2 and PI(3,4,5)P3. Also binds 25-hydroxycholesterol and cholesterol. The chain is Oxysterol-binding protein-related protein 3 (Osbpl3) from Mus musculus (Mouse).